A 486-amino-acid chain; its full sequence is Argininosuccinate lyase (486 aa).

Belongs to the lyase 1 family. Argininosuccinate lyase subfamily.

The protein localises to the cytoplasm. The catalysed reaction is 2-(N(omega)-L-arginino)succinate = fumarate + L-arginine. Its pathway is amino-acid biosynthesis; L-arginine biosynthesis; L-arginine from L-ornithine and carbamoyl phosphate: step 3/3. This chain is Argininosuccinate lyase, found in Acidobacterium capsulatum (strain ATCC 51196 / DSM 11244 / BCRC 80197 / JCM 7670 / NBRC 15755 / NCIMB 13165 / 161).